Reading from the N-terminus, the 548-residue chain is MAAKDVKFGNDARIKMLEGVNVLADAVKVTLGPKGRNVVLDKSFGAPTITKDGVSVAREIELEDKFQNMGAQMVKEVASQANDAAGDGTTTATVLAQAIITEGLKAVAAGMNPMDLKRGIDKAVVAAVEELKALSVPCADTKAIAQVGTISANSDSTVGNLIAEAMDKVGRDGVITVEEGQALQDELDVVEGMQFDRGYLSPYFVNNQEAGSVDLESPFILLVDKKVSNIRELLPTLEAVAKASRPLLIIAEDVEGEALATLVVNNMRGIVKVAAVKAPGFGDRRKAMLQDIAVLTAGSVISEEIGLELEKVVLEDLGQAKRVTITKETTTIIDGSGEETIIQGRVSQIRQQIEDATSDYDKEKLQERVAKLAGGVAVIKVGAATEVEMKEKKDRVEDALHATRAAVEEGVVAGGGVALIRVASKVAGLVGDNEEQNVGIRVALRAMEAPIRQITKNAGEEDSVVANNVKAGEGSYGYNAATGEYGDMIEMGILDPTKVTRSALQFAASVAGLMITTEAMVTDKPQDSGSAMPDMGGMGGMGGMGGMM.

Residues 30–33 (TLGP), K51, 87–91 (DGTTT), G415, 479–481 (NAA), and D495 contribute to the ATP site.

This sequence belongs to the chaperonin (HSP60) family. In terms of assembly, forms a cylinder of 14 subunits composed of two heptameric rings stacked back-to-back. Interacts with the co-chaperonin GroES.

It is found in the cytoplasm. It carries out the reaction ATP + H2O + a folded polypeptide = ADP + phosphate + an unfolded polypeptide.. Its function is as follows. Together with its co-chaperonin GroES, plays an essential role in assisting protein folding. The GroEL-GroES system forms a nano-cage that allows encapsulation of the non-native substrate proteins and provides a physical environment optimized to promote and accelerate protein folding. The sequence is that of Chaperonin GroEL from Aliivibrio fischeri (strain MJ11) (Vibrio fischeri).